A 362-amino-acid chain; its full sequence is UPF0324 membrane protein YPO1307/y2878/YP_1285 (362 aa).

A run of 9 helical transmembrane segments spans residues 21–38 (YIPG…ALNV), 48–70 (GLGA…YPWL), 102–124 (VADV…FILA), 139–161 (VMLI…EPVL), 168–190 (VAVA…PWLY), 240–257 (MIRV…SAYL), 278–300 (WFAV…AVWV), 305–327 (TLDT…IGSI), and 334–356 (PLLL…NLFV).

It belongs to the UPF0324 family.

The protein resides in the cell membrane. This chain is UPF0324 membrane protein YPO1307/y2878/YP_1285, found in Yersinia pestis.